Here is a 474-residue protein sequence, read N- to C-terminus: 1-aminocyclopropane-1-carboxylate synthase 4 (474 aa).

2 residues coordinate substrate: E47 and Y85. Position 273 is an N6-(pyridoxal phosphate)lysine (K273).

This sequence belongs to the class-I pyridoxal-phosphate-dependent aminotransferase family. In terms of assembly, homodimer and heterodimer. In vivo, the relevance of heterodimerization with other ACS enzymes is however unsure. Interacts with XBAT32. Interacts (via its C-terminal region) with ETO1 and EOL1. The cofactor is pyridoxal 5'-phosphate. Ubiquitinated by XBAT32. Ubiquitination probably leads to its subsequent degradation, thus controlling ethylene production. In terms of tissue distribution, expressed in roots, leaves and flowers.

It catalyses the reaction S-adenosyl-L-methionine = 1-aminocyclopropane-1-carboxylate + S-methyl-5'-thioadenosine + H(+). It participates in alkene biosynthesis; ethylene biosynthesis via S-adenosyl-L-methionine; ethylene from S-adenosyl-L-methionine: step 1/2. In terms of biological role, 1-aminocyclopropane-1-carboxylate synthase (ACS) enzymes catalyze the conversion of S-adenosyl-L-methionine (SAM) into 1-aminocyclopropane-1-carboxylate (ACC), a direct precursor of ethylene. This chain is 1-aminocyclopropane-1-carboxylate synthase 4 (ACS4), found in Arabidopsis thaliana (Mouse-ear cress).